The primary structure comprises 171 residues: Histone H1, gonadal (171 aa).

Disordered stretches follow at residues 1–40 and 133–171; these read AASPQKRAASPRKSPKKSPRKSPKKKSPRKRKARSAAHPP and AKAKKAKAAARRKAAAAKRKAAAAKRRAAKKARKAKAKP. Positions 9–35 are enriched in basic residues; that stretch reads ASPRKSPKKSPRKSPKKKSPRKRKARS. The H15 domain maps to 37-111; sequence AHPPVIDMIT…GATGRFRVGA (75 aa).

The protein belongs to the histone H1/H5 family. In terms of tissue distribution, sperm.

The protein localises to the nucleus. It is found in the chromosome. In terms of biological role, histones H1 are necessary for the condensation of nucleosome chains into higher-order structures. In Echinolampas crassa (Sea urchin), this protein is Histone H1, gonadal.